The following is a 169-amino-acid chain: Disulfide bond formation protein B (169 aa).

Topologically, residues 1–13 are cytoplasmic; it reads MQALNHFSRIRLS. The helical transmembrane segment at 14–30 threads the bilayer; it reads WFLLLLCIIFFEASALT. Topologically, residues 31-48 are periplasmic; sequence FQHIMKLPPCVMCIYERV. A disulfide bridge connects residues cysteine 40 and cysteine 43. Residues 49–64 form a helical membrane-spanning segment; that stretch reads AMMGIGGAAIIGLLNP. At 65-71 the chain is on the cytoplasmic side; sequence NNLIIRW. A helical transmembrane segment spans residues 72 to 89; the sequence is CGFIAWGISAGWGLKLAL. Over 90-144 the chain is Periplasmic; the sequence is EHVDFQLNPSPFSTCDLFVTFPSWAPLNKWAPWMFEAYGDCSKIVWQFLTLTMPQ. A disulfide bridge connects residues cysteine 104 and cysteine 130. The chain crosses the membrane as a helical span at residues 145–163; sequence WLVIIFAGNLIALAIFVIA. The Cytoplasmic portion of the chain corresponds to 164–169; sequence QFFNKK.

This sequence belongs to the DsbB family.

It localises to the cell inner membrane. Its function is as follows. Required for disulfide bond formation in some periplasmic proteins. Acts by oxidizing the DsbA protein. This Aliivibrio fischeri (strain ATCC 700601 / ES114) (Vibrio fischeri) protein is Disulfide bond formation protein B.